The primary structure comprises 393 residues: NAD(P)H-quinone oxidoreductase subunit H, chloroplastic (393 aa).

It belongs to the complex I 49 kDa subunit family. In terms of assembly, NDH is composed of at least 16 different subunits, 5 of which are encoded in the nucleus.

It localises to the plastid. It is found in the chloroplast thylakoid membrane. It carries out the reaction a plastoquinone + NADH + (n+1) H(+)(in) = a plastoquinol + NAD(+) + n H(+)(out). The enzyme catalyses a plastoquinone + NADPH + (n+1) H(+)(in) = a plastoquinol + NADP(+) + n H(+)(out). NDH shuttles electrons from NAD(P)H:plastoquinone, via FMN and iron-sulfur (Fe-S) centers, to quinones in the photosynthetic chain and possibly in a chloroplast respiratory chain. The immediate electron acceptor for the enzyme in this species is believed to be plastoquinone. Couples the redox reaction to proton translocation, and thus conserves the redox energy in a proton gradient. The protein is NAD(P)H-quinone oxidoreductase subunit H, chloroplastic of Piper cenocladum (Ant piper).